The primary structure comprises 261 residues: (3R)-3-hydroxyacyl-CoA dehydrogenase (261 aa).

Residues Leu-15 to Ile-23 and Asp-42 to Leu-43 contribute to the NAD(+) site. Position 60 is a phosphoserine (Ser-60). NAD(+) is bound at residue Ala-74–Val-76. Residue Ser-156 coordinates substrate. Position 160 is an N6-succinyllysine (Lys-160). Catalysis depends on Tyr-169, which acts as the Proton acceptor. Residues Tyr-169–Lys-173 and Ile-202–Thr-204 contribute to the NAD(+) site. Lys-173 is subject to N6-succinyllysine.

The protein belongs to the short-chain dehydrogenases/reductases (SDR) family. As to quaternary structure, heterotetramer with CBR4; contains two molecules of HSD17B8 and CBR4. As to expression, widely expressed, particularly abundant in prostate, placenta and kidney. Expressed at protein level in various tissues like brain, cerebellum, heart, lung, kidney, ovary, testis, adrenals and prostate.

The protein resides in the mitochondrion matrix. The catalysed reaction is a (3R)-3-hydroxyacyl-CoA + NAD(+) = a 3-oxoacyl-CoA + NADH + H(+). It carries out the reaction 17beta-estradiol + NAD(+) = estrone + NADH + H(+). The enzyme catalyses testosterone + NAD(+) = androst-4-ene-3,17-dione + NADH + H(+). It catalyses the reaction 17beta-hydroxy-5alpha-androstan-3-one + NAD(+) = 5alpha-androstan-3,17-dione + NADH + H(+). Its pathway is steroid biosynthesis; estrogen biosynthesis. The protein operates within lipid metabolism; fatty acid biosynthesis. It functions in the pathway lipid metabolism; mitochondrial fatty acid beta-oxidation. Its function is as follows. Required for the solubility and assembly of the heterotetramer 3-ketoacyl-[acyl carrier protein] (ACP) reductase functional complex (KAR or KAR1) that forms part of the mitochondrial fatty acid synthase (mtFAS). Alpha-subunit of the KAR complex that acts as a scaffold protein required for the stability of carbonyl reductase type-4 (CBR4, beta-subunit of the KAR complex) and for its 3-ketoacyl-ACP reductase activity, thereby participating in mitochondrial fatty acid biosynthesis. Catalyzes the NAD-dependent conversion of (3R)-3-hydroxyacyl-CoA into 3-ketoacyl-CoA (3-oxoacyl-CoA) with no chain length preference; this enzymatic activity is not needed for the KAR function. Prefers (3R)-3-hydroxyacyl-CoA over (3S)-3-hydroxyacyl-CoA and displays enzymatic activity only in the presence of NAD(+). Cooperates with enoyl-CoA hydratase 1 in mitochondria, together they constitute an alternative route to the auxiliary enzyme pathways for the breakdown of Z-PUFA (cis polyunsaturated fatty acid) enoyl-esters. NAD-dependent 17-beta-hydroxysteroid dehydrogenase with highest activity towards estradiol (17beta-estradiol or E2). Has very low activity towards testosterone and dihydrotestosterone (17beta-hydroxy-5alpha-androstan-3-one). Primarily an oxidative enzyme, it can switch to a reductive mode determined in the appropriate physiologic milieu and catalyze the reduction of estrone (E1) to form biologically active 17beta-estradiol. The chain is (3R)-3-hydroxyacyl-CoA dehydrogenase (HSD17B8) from Homo sapiens (Human).